A 570-amino-acid chain; its full sequence is 4-coumarate--CoA ligase 4 (570 aa).

Residues Ser-218, Ser-219, Gly-220, Thr-221, Thr-222, and Lys-226 each coordinate ATP. Tyr-268 contacts (E)-4-coumaroyl-AMP. Arg-289 contacts CoA. An SBD1 region spans residues 291-360 (ELNLVMELIQ…LKFPNAIFGQ (70 aa)). The (E)-4-coumaroyl-AMP site is built by Ala-338, Gln-360, Gly-361, and Thr-365. Positions 360, 361, 365, 448, and 463 each coordinate ATP. Positions 361 to 427 (GYGMTESGTV…VRGHQLMKGY (67 aa)) are SBD2. (E)-4-coumaroyl-AMP is bound by residues Lys-465 and Lys-469. Residues Lys-471 and Gly-472 each contribute to the CoA site. Residue Lys-554 participates in ATP binding.

The protein belongs to the ATP-dependent AMP-binding enzyme family. Requires Mg(2+) as cofactor.

The enzyme catalyses (E)-sinapate + ATP + CoA = (E)-sinapoyl-CoA + AMP + diphosphate. It catalyses the reaction (E)-4-coumarate + ATP + CoA = (E)-4-coumaroyl-CoA + AMP + diphosphate. It carries out the reaction (E)-caffeate + ATP + CoA = (E)-caffeoyl-CoA + AMP + diphosphate. The catalysed reaction is (E)-ferulate + ATP + CoA = (E)-feruloyl-CoA + AMP + diphosphate. The enzyme catalyses (E)-sinapate + ATP + H(+) = (E)-sinapoyl-AMP + diphosphate. It catalyses the reaction (E)-sinapoyl-AMP + CoA = (E)-sinapoyl-CoA + AMP + H(+). It carries out the reaction (E)-4-coumarate + ATP + H(+) = (E)-4-coumaroyl-AMP + diphosphate. The catalysed reaction is (E)-4-coumaroyl-AMP + CoA = (E)-4-coumaroyl-CoA + AMP + H(+). The enzyme catalyses (E)-caffeate + ATP + H(+) = (E)-caffeoyl-AMP + diphosphate. It catalyses the reaction (E)-caffeoyl-AMP + CoA = (E)-caffeoyl-CoA + AMP + H(+). It carries out the reaction (E)-ferulate + ATP + H(+) = (E)-feruloyl-AMP + diphosphate. The catalysed reaction is (E)-feruloyl-AMP + CoA = (E)-feruloyl-CoA + AMP + H(+). The protein operates within phytoalexin biosynthesis; 3,4',5-trihydroxystilbene biosynthesis; 3,4',5-trihydroxystilbene from trans-4-coumarate: step 1/2. Functionally, produces CoA thioesters of a variety of hydroxy- and methoxy-substituted cinnamic acids, which are used to synthesize several phenylpropanoid-derived compounds, including anthocyanins, flavonoids, isoflavonoids, coumarins, lignin, suberin and wall-bound phenolics. Follows a two-step reaction mechanism, wherein the carboxylate substrate first undergoes adenylation by ATP, followed by a thioesterification in the presence of CoA to yield the final CoA thioesters. In Arabidopsis thaliana (Mouse-ear cress), this protein is 4-coumarate--CoA ligase 4.